A 315-amino-acid chain; its full sequence is Ornithine carbamoyltransferase (315 aa).

Residues 53 to 56, glutamine 80, arginine 104, and 131 to 134 each bind carbamoyl phosphate; these read STRT and HPCQ. L-ornithine is bound by residues asparagine 163, aspartate 227, and 231-232; that span reads SM. Residues 267 to 268 and arginine 295 each bind carbamoyl phosphate; that span reads CL.

Belongs to the aspartate/ornithine carbamoyltransferase superfamily. OTCase family.

Its subcellular location is the cytoplasm. The enzyme catalyses carbamoyl phosphate + L-ornithine = L-citrulline + phosphate + H(+). It functions in the pathway amino-acid degradation; L-arginine degradation via ADI pathway; carbamoyl phosphate from L-arginine: step 2/2. Reversibly catalyzes the transfer of the carbamoyl group from carbamoyl phosphate (CP) to the N(epsilon) atom of ornithine (ORN) to produce L-citrulline. The polypeptide is Ornithine carbamoyltransferase (Rhodococcus opacus (strain B4)).